Here is a 121-residue protein sequence, read N- to C-terminus: Large ribosomal subunit protein bL12 (121 aa).

The protein belongs to the bacterial ribosomal protein bL12 family. Homodimer. Part of the ribosomal stalk of the 50S ribosomal subunit. Forms a multimeric L10(L12)X complex, where L10 forms an elongated spine to which 2 to 4 L12 dimers bind in a sequential fashion. Binds GTP-bound translation factors.

In terms of biological role, forms part of the ribosomal stalk which helps the ribosome interact with GTP-bound translation factors. Is thus essential for accurate translation. This chain is Large ribosomal subunit protein bL12, found in Clostridium beijerinckii (strain ATCC 51743 / NCIMB 8052) (Clostridium acetobutylicum).